The chain runs to 418 residues: Glutamyl-tRNA reductase (418 aa).

Residues 49–52 (TCNR), Ser109, 114–116 (EPQ), and Gln120 each bind substrate. Catalysis depends on Cys50, which acts as the Nucleophile. 189–194 (GAGETI) provides a ligand contact to NADP(+).

It belongs to the glutamyl-tRNA reductase family. In terms of assembly, homodimer.

It catalyses the reaction (S)-4-amino-5-oxopentanoate + tRNA(Glu) + NADP(+) = L-glutamyl-tRNA(Glu) + NADPH + H(+). The protein operates within porphyrin-containing compound metabolism; protoporphyrin-IX biosynthesis; 5-aminolevulinate from L-glutamyl-tRNA(Glu): step 1/2. Its function is as follows. Catalyzes the NADPH-dependent reduction of glutamyl-tRNA(Glu) to glutamate 1-semialdehyde (GSA). The chain is Glutamyl-tRNA reductase from Pectobacterium atrosepticum (strain SCRI 1043 / ATCC BAA-672) (Erwinia carotovora subsp. atroseptica).